The sequence spans 179 residues: MKREDIKYIIESVMFAYGEPISIKELNYIINKELSSKEIEIMLNLLIEEYREQNRGIQIIKLENKYQMCTNKDYAEYIKKIIEPKKKKSLSQATLETLTIIAYKQPITKVEIEDIRGVKCDKVLQTLFENELIREAGRLNKIGKPIIYKTTDEFLKLLNIESLEELPPIENYQEVATNE.

The protein belongs to the ScpB family. As to quaternary structure, homodimer. Homodimerization may be required to stabilize the binding of ScpA to the Smc head domains. Component of a cohesin-like complex composed of ScpA, ScpB and the Smc homodimer, in which ScpA and ScpB bind to the head domain of Smc. The presence of the three proteins is required for the association of the complex with DNA.

Its subcellular location is the cytoplasm. Participates in chromosomal partition during cell division. May act via the formation of a condensin-like complex containing Smc and ScpA that pull DNA away from mid-cell into both cell halves. The protein is Segregation and condensation protein B of Clostridioides difficile (strain 630) (Peptoclostridium difficile).